We begin with the raw amino-acid sequence, 85 residues long: Photosystem I reaction center subunit PsaK (85 aa).

The next 2 membrane-spanning stretches (helical) occupy residues 12–34 (TVTW…IAVG) and 54–76 (GGMG…IGAI).

It belongs to the PsaG/PsaK family.

The protein localises to the cellular thylakoid membrane. The chain is Photosystem I reaction center subunit PsaK from Parasynechococcus marenigrum (strain WH8102).